We begin with the raw amino-acid sequence, 189 residues long: MyoD family inhibitor domain-containing protein 2 (189 aa).

The MDFI domain maps to 28–188 (KEDTQLTNAK…LAMEISEICY (161 aa)).

This sequence belongs to the MDFI family.

The protein is MyoD family inhibitor domain-containing protein 2 of Homo sapiens (Human).